A 455-amino-acid chain; its full sequence is tRNA modification GTPase MnmE (455 aa).

Residues arginine 24, glutamate 81, and lysine 120 each coordinate (6S)-5-formyl-5,6,7,8-tetrahydrofolate. The TrmE-type G domain occupies 216 to 378 (GMTVVIAGRP…LREHLKACMG (163 aa)). A K(+)-binding site is contributed by asparagine 226. GTP is bound by residues 226 to 231 (NAGKSS), 245 to 251 (TDIAGTT), 270 to 273 (DTAG), 335 to 338 (NKAD), and 359 to 361 (SAR). Residue serine 230 coordinates Mg(2+). Threonine 245, isoleucine 247, and threonine 250 together coordinate K(+). Threonine 251 contributes to the Mg(2+) binding site. A (6S)-5-formyl-5,6,7,8-tetrahydrofolate-binding site is contributed by lysine 455.

It belongs to the TRAFAC class TrmE-Era-EngA-EngB-Septin-like GTPase superfamily. TrmE GTPase family. As to quaternary structure, homodimer. Heterotetramer of two MnmE and two MnmG subunits. K(+) is required as a cofactor.

It localises to the cytoplasm. In terms of biological role, exhibits a very high intrinsic GTPase hydrolysis rate. Involved in the addition of a carboxymethylaminomethyl (cmnm) group at the wobble position (U34) of certain tRNAs, forming tRNA-cmnm(5)s(2)U34. This is tRNA modification GTPase MnmE from Pseudomonas paraeruginosa (strain DSM 24068 / PA7) (Pseudomonas aeruginosa (strain PA7)).